The following is a 151-amino-acid chain: Large-conductance mechanosensitive channel (151 aa).

Helical transmembrane passes span 12–32 (GNIVDLAVAVVIGTAFTALVT) and 71–91 (VLLSAAINFFLIAFAVYFLVV). Residues 122–151 (AQTNGDSPGRHGGRGTPSPTDGPRASTESQ) form a disordered region.

The protein belongs to the MscL family. Homopentamer.

It is found in the cell membrane. Channel that opens in response to stretch forces in the membrane lipid bilayer. May participate in the regulation of osmotic pressure changes within the cell. This is Large-conductance mechanosensitive channel from Mycobacterium tuberculosis (strain CDC 1551 / Oshkosh).